We begin with the raw amino-acid sequence, 76 residues long: Exodeoxyribonuclease 7 small subunit (76 aa).

Belongs to the XseB family. Heterooligomer composed of large and small subunits.

It localises to the cytoplasm. It catalyses the reaction Exonucleolytic cleavage in either 5'- to 3'- or 3'- to 5'-direction to yield nucleoside 5'-phosphates.. Bidirectionally degrades single-stranded DNA into large acid-insoluble oligonucleotides, which are then degraded further into small acid-soluble oligonucleotides. This chain is Exodeoxyribonuclease 7 small subunit, found in Staphylococcus aureus (strain Mu3 / ATCC 700698).